The sequence spans 78 residues: UPF0248 protein Msed_0897 (78 aa).

It belongs to the UPF0248 family.

The sequence is that of UPF0248 protein Msed_0897 from Metallosphaera sedula (strain ATCC 51363 / DSM 5348 / JCM 9185 / NBRC 15509 / TH2).